The sequence spans 295 residues: GTPase Era (295 aa).

Residues 4–171 (KSGFVTIIGR…INLIVQYLPE (168 aa)) enclose the Era-type G domain. The segment at 12 to 19 (GRPNVGKS) is G1. 12–19 (GRPNVGKS) contacts GTP. A G2 region spans residues 38–42 (QTTRN). Residues 59 to 62 (DTPG) form a G3 region. GTP-binding positions include 59–63 (DTPGI) and 121–124 (NKID). The segment at 121–124 (NKID) is G4. The interval 150 to 152 (ISA) is G5. A KH type-2 domain is found at 194–280 (IREKILHYTD…YLELWVKVKE (87 aa)).

It belongs to the TRAFAC class TrmE-Era-EngA-EngB-Septin-like GTPase superfamily. Era GTPase family. Monomer.

Its subcellular location is the cytoplasm. It is found in the cell membrane. An essential GTPase that binds both GDP and GTP, with rapid nucleotide exchange. Plays a role in 16S rRNA processing and 30S ribosomal subunit biogenesis and possibly also in cell cycle regulation and energy metabolism. This is GTPase Era from Alkaliphilus oremlandii (strain OhILAs) (Clostridium oremlandii (strain OhILAs)).